A 313-amino-acid polypeptide reads, in one-letter code: Dehydrogenase/reductase SDR family member 1 (313 aa).

NAD(+) is bound at residue isoleucine 19. Arginine 21 is modified (omega-N-methylarginine). An NAD(+)-binding site is contributed by aspartate 64. Serine 151 contributes to the substrate binding site. 3 residues coordinate NAD(+): tyrosine 163, lysine 167, and threonine 198. Tyrosine 163 serves as the catalytic Proton acceptor.

The protein belongs to the short-chain dehydrogenases/reductases (SDR) family.

It localises to the endoplasmic reticulum. It carries out the reaction 17alpha-estradiol + NADP(+) = estrone + NADPH + H(+). The catalysed reaction is testosterone + NADP(+) = androst-4-ene-3,17-dione + NADPH + H(+). The enzyme catalyses prostaglandin E1 + NADPH + H(+) = prostaglandin F1 + NADP(+). It catalyses the reaction isatin + NADPH + H(+) = 3-hydroxyindolin-2-one + NADP(+). NADPH-dependent oxidoreductase which catalyzes the reduction of some steroids (estrone, androstene-3,17-dione and cortisone) as well as prostaglandin E1, isatin and xenobiotics in vitro. May have a role in steroid and/or xenobiotic metabolism. The protein is Dehydrogenase/reductase SDR family member 1 of Mus musculus (Mouse).